We begin with the raw amino-acid sequence, 1910 residues long: C2 domain-containing protein (1910 aa).

Basic and acidic residues predominate over residues 1 to 28 (MMKLKEMVEAAEAKVESKPPQAAEEKAP). 3 disordered regions span residues 1-54 (MMKL…EPLD), 355-377 (AMKL…PEDG), and 398-428 (LEEL…DGPQ). A compositionally biased stretch (basic and acidic residues) spans 414–423 (KGEDKKDGNK). The C2 domain maps to 557-678 (QLGEVSESDS…FFNEKHNKRN (122 aa)). Basic and acidic residues-rich tracts occupy residues 1192–1205 (LAQK…DAQR) and 1215–1228 (GHEG…DKQG). Disordered stretches follow at residues 1192–1267 (LAQK…VKKG), 1405–1424 (ATAG…RDMQ), 1431–1654 (LEEA…SMGA), 1666–1747 (QRKH…FLSS), 1822–1841 (AKEE…DWSD), and 1879–1910 (DACS…AGRT). 2 stretches are compositionally biased toward low complexity: residues 1239–1257 (AAAA…VQGA) and 1405–1414 (ATAGEGEQQT). The segment covering 1440–1469 (KKKKKKEKKEKKEKKEKKEKKEKKEKKKKK) has biased composition (basic residues). Residues 1492–1502 (PAAAIPSVLLP) are compositionally biased toward low complexity. Residues 1517–1526 (KKEKKEKKKK) are compositionally biased toward basic residues. Low complexity predominate over residues 1550 to 1561 (PAAAIPSILLPA). A compositionally biased stretch (basic and acidic residues) spans 1569–1584 (EKPKEKKTEKKKEKHT). Positions 1595 to 1604 (LPESETTAVV) are enriched in polar residues. 2 stretches are compositionally biased toward low complexity: residues 1620 to 1629 (VPSSIASSEA) and 1675 to 1698 (SSSS…SSSS). Over residues 1701 to 1711 (AETRAKADALR) the composition is skewed to basic and acidic residues. Composition is skewed to low complexity over residues 1712–1722 (ARLQAAQARLA) and 1729–1747 (VSSS…FLSS). Residues 1766 to 1828 (QQRLQKMVSG…TRRAKEEKDL (63 aa)) are a coiled coil. A compositionally biased stretch (polar residues) spans 1890 to 1904 (ESRTTAGAKLRQQQL).

It is found in the membrane. Functionally, regulates microneme secretion. Probably involved in regulation of rhoptry and dense granule secretion. This is C2 domain-containing protein from Toxoplasma gondii.